A 505-amino-acid polypeptide reads, in one-letter code: 2,3-bisphosphoglycerate-independent phosphoglycerate mutase (505 aa).

Mn(2+) is bound by residues Asp15 and Ser65. The active-site Phosphoserine intermediate is Ser65. Substrate-binding positions include His126, 156-157 (RD), Arg187, Arg193, 260-263 (RPDR), and Lys333. Mn(2+) is bound by residues Asp398, His402, Asp439, His440, and His457.

Belongs to the BPG-independent phosphoglycerate mutase family. Monomer. Mn(2+) serves as cofactor.

It catalyses the reaction (2R)-2-phosphoglycerate = (2R)-3-phosphoglycerate. It functions in the pathway carbohydrate degradation; glycolysis; pyruvate from D-glyceraldehyde 3-phosphate: step 3/5. In terms of biological role, catalyzes the interconversion of 2-phosphoglycerate and 3-phosphoglycerate. In Mycoplasmopsis pulmonis (strain UAB CTIP) (Mycoplasma pulmonis), this protein is 2,3-bisphosphoglycerate-independent phosphoglycerate mutase.